A 1178-amino-acid polypeptide reads, in one-letter code: DNA-directed RNA polymerase subunit beta' (1178 aa).

The Zn(2+) site is built by Cys60, Cys62, Cys75, and Cys78. 3 residues coordinate Mg(2+): Asp450, Asp452, and Asp454. Residues Cys795, Cys869, Cys876, and Cys879 each contribute to the Zn(2+) site.

This sequence belongs to the RNA polymerase beta' chain family. The RNAP catalytic core consists of 2 alpha, 1 beta, 1 beta' and 1 omega subunit. When a sigma factor is associated with the core the holoenzyme is formed, which can initiate transcription. The cofactor is Mg(2+). It depends on Zn(2+) as a cofactor.

It carries out the reaction RNA(n) + a ribonucleoside 5'-triphosphate = RNA(n+1) + diphosphate. Functionally, DNA-dependent RNA polymerase catalyzes the transcription of DNA into RNA using the four ribonucleoside triphosphates as substrates. The protein is DNA-directed RNA polymerase subunit beta' of Clostridium beijerinckii (strain ATCC 51743 / NCIMB 8052) (Clostridium acetobutylicum).